The following is a 314-amino-acid chain: tRNA dimethylallyltransferase (314 aa).

36 to 43 (GPTASGKT) lines the ATP pocket. A substrate-binding site is contributed by 38–43 (TASGKT). An interaction with substrate tRNA region spans residues 61–64 (DSVQ).

It belongs to the IPP transferase family. Monomer. Mg(2+) serves as cofactor.

It catalyses the reaction adenosine(37) in tRNA + dimethylallyl diphosphate = N(6)-dimethylallyladenosine(37) in tRNA + diphosphate. Its function is as follows. Catalyzes the transfer of a dimethylallyl group onto the adenine at position 37 in tRNAs that read codons beginning with uridine, leading to the formation of N6-(dimethylallyl)adenosine (i(6)A). This Sorangium cellulosum (strain So ce56) (Polyangium cellulosum (strain So ce56)) protein is tRNA dimethylallyltransferase.